The following is a 265-amino-acid chain: Thiazole synthase (265 aa).

Catalysis depends on Lys106, which acts as the Schiff-base intermediate with DXP. Residues Gly167, 193–194, and 215–216 each bind 1-deoxy-D-xylulose 5-phosphate; these read AG and NT. The tract at residues 245 to 265 is disordered; that stretch reads GRIPRRARAEPSSPQLGLVGS.

It belongs to the ThiG family. Homotetramer. Forms heterodimers with either ThiH or ThiS.

It localises to the cytoplasm. It catalyses the reaction [ThiS sulfur-carrier protein]-C-terminal-Gly-aminoethanethioate + 2-iminoacetate + 1-deoxy-D-xylulose 5-phosphate = [ThiS sulfur-carrier protein]-C-terminal Gly-Gly + 2-[(2R,5Z)-2-carboxy-4-methylthiazol-5(2H)-ylidene]ethyl phosphate + 2 H2O + H(+). Its pathway is cofactor biosynthesis; thiamine diphosphate biosynthesis. Its function is as follows. Catalyzes the rearrangement of 1-deoxy-D-xylulose 5-phosphate (DXP) to produce the thiazole phosphate moiety of thiamine. Sulfur is provided by the thiocarboxylate moiety of the carrier protein ThiS. In vitro, sulfur can be provided by H(2)S. In Methylobacterium sp. (strain 4-46), this protein is Thiazole synthase.